Reading from the N-terminus, the 272-residue chain is uncharacterized protein (272 aa).

The interval 193–250 (AFLLPNNSKGVEKSEENEDGVTDNDSSNVNSSTNESPNPTDINVCSNDDATDNTENNL) is disordered. Residues 215-233 (DNDSSNVNSSTNESPNPTD) are compositionally biased toward low complexity. Polar residues predominate over residues 235-248 (NVCSNDDATDNTEN).

Belongs to the pal1 family.

The protein localises to the cytoplasm. The protein resides in the nucleus. This is an uncharacterized protein from Schizosaccharomyces pombe (strain 972 / ATCC 24843) (Fission yeast).